A 195-amino-acid chain; its full sequence is uncharacterized protein (195 aa).

Positions 1–16 are cleaved as a signal peptide; it reads MIRTIIVFMLLTISFG.

This is an uncharacterized protein from Acanthamoeba polyphaga mimivirus (APMV).